The chain runs to 429 residues: MSIIIKIHARQIFDSRGNPTIEVDVVTENGVLGRAAVPSGASTGEHEAMELRDGGKAYLGKGVLKAVENVNTIIASELLGTSVFEQNLIDKIMIDLDGTPNKSNLGANAILGVSLAAAKAAANELGLPLYRYIGGVSANTLPVPMMNIINGGSHSDAPIAFQEFMIIPVKAASFTQAMQMGTEIFHHLKKVLHDRGLSTAVGDEGGFAPNLAGGTEDALETIKKAVQSAGYTFGDDIMIALDCAASEFYVNGKYDYTKFEGTTGKIRTSEEQADYLAELASKYPIISIEDGMQEDDWAGWKYLTEKIGHKTQLVGDDLFVTNVTRLSRGISEGIANSILVKVNQIGTLTETIAAVNMAHNAGYTSVMSHRSGETEDHTIADLAVALNCGQIKTGSASRSDRMSKYNQLLRIEEELNDVAYFPGAKAFKK.

Glutamine 162 is a binding site for (2R)-2-phosphoglycerate. Glutamate 204 serves as the catalytic Proton donor. Residues aspartate 242, glutamate 289, and aspartate 316 each coordinate Mg(2+). (2R)-2-phosphoglycerate is bound by residues lysine 341, arginine 370, serine 371, and lysine 392. The active-site Proton acceptor is lysine 341.

It belongs to the enolase family. Mg(2+) serves as cofactor.

It localises to the cytoplasm. The protein resides in the secreted. The protein localises to the cell surface. It carries out the reaction (2R)-2-phosphoglycerate = phosphoenolpyruvate + H2O. It functions in the pathway carbohydrate degradation; glycolysis; pyruvate from D-glyceraldehyde 3-phosphate: step 4/5. Its function is as follows. Catalyzes the reversible conversion of 2-phosphoglycerate (2-PG) into phosphoenolpyruvate (PEP). It is essential for the degradation of carbohydrates via glycolysis. The protein is Enolase of Flavobacterium psychrophilum (strain ATCC 49511 / DSM 21280 / CIP 103535 / JIP02/86).